The sequence spans 294 residues: Diaminopimelate epimerase (294 aa).

Residues asparagine 13, glutamine 46, and asparagine 69 each coordinate substrate. The Proton donor role is filled by cysteine 78. Residues 79 to 80 (GN), asparagine 173, asparagine 206, and 224 to 225 (ER) each bind substrate. Cysteine 233 (proton acceptor) is an active-site residue. Residue 234–235 (GT) participates in substrate binding.

The protein belongs to the diaminopimelate epimerase family. As to quaternary structure, homodimer.

Its subcellular location is the cytoplasm. It catalyses the reaction (2S,6S)-2,6-diaminopimelate = meso-2,6-diaminopimelate. It functions in the pathway amino-acid biosynthesis; L-lysine biosynthesis via DAP pathway; DL-2,6-diaminopimelate from LL-2,6-diaminopimelate: step 1/1. In terms of biological role, catalyzes the stereoinversion of LL-2,6-diaminopimelate (L,L-DAP) to meso-diaminopimelate (meso-DAP), a precursor of L-lysine and an essential component of the bacterial peptidoglycan. This is Diaminopimelate epimerase from Variovorax paradoxus (strain S110).